The following is a 442-amino-acid chain: Tol-Pal system protein TolB (442 aa).

An N-terminal signal peptide occupies residues 1 to 26 (MRHRSCFSLFAGLALVFCLAVGTAAA).

Belongs to the TolB family. In terms of assembly, the Tol-Pal system is composed of five core proteins: the inner membrane proteins TolA, TolQ and TolR, the periplasmic protein TolB and the outer membrane protein Pal. They form a network linking the inner and outer membranes and the peptidoglycan layer.

The protein localises to the periplasm. Part of the Tol-Pal system, which plays a role in outer membrane invagination during cell division and is important for maintaining outer membrane integrity. The chain is Tol-Pal system protein TolB from Nitratidesulfovibrio vulgaris (strain ATCC 29579 / DSM 644 / CCUG 34227 / NCIMB 8303 / VKM B-1760 / Hildenborough) (Desulfovibrio vulgaris).